We begin with the raw amino-acid sequence, 620 residues long: Toxin coregulated pilus biosynthesis protein I (620 aa).

Residues 344–580 (TMNDLSIKQT…DVAKQMEDIR (237 aa)) enclose the Methyl-accepting transducer domain.

This sequence belongs to the methyl-accepting chemotaxis (MCP) protein family.

The protein resides in the cell inner membrane. Functionally, may function as an environmental regulator of TCP biogenesis. Negatively regulates the synthesis of the major pilin subunit of TCP (TcpA). The sequence is that of Toxin coregulated pilus biosynthesis protein I (tcpI) from Vibrio cholerae serotype O1 (strain ATCC 39315 / El Tor Inaba N16961).